The chain runs to 359 residues: NADH-quinone oxidoreductase subunit H (359 aa).

The next 8 helical transmembrane spans lie at 16 to 36 (IWPA…AVLA), 94 to 114 (GLFI…WAVI), 128 to 148 (GLLF…IAGW), 167 to 187 (VSYE…SGSL), 205 to 225 (GLTF…VYFI), 261 to 281 (FFLA…LLFL), 296 to 316 (IPGW…FLWV), and 331 to 351 (LGWK…GAWM).

The protein belongs to the complex I subunit 1 family. In terms of assembly, NDH-1 is composed of 14 different subunits. Subunits NuoA, H, J, K, L, M, N constitute the membrane sector of the complex.

Its subcellular location is the cell inner membrane. It catalyses the reaction a quinone + NADH + 5 H(+)(in) = a quinol + NAD(+) + 4 H(+)(out). Functionally, NDH-1 shuttles electrons from NADH, via FMN and iron-sulfur (Fe-S) centers, to quinones in the respiratory chain. The immediate electron acceptor for the enzyme in this species is believed to be ubiquinone. Couples the redox reaction to proton translocation (for every two electrons transferred, four hydrogen ions are translocated across the cytoplasmic membrane), and thus conserves the redox energy in a proton gradient. This subunit may bind ubiquinone. The polypeptide is NADH-quinone oxidoreductase subunit H (Polaromonas naphthalenivorans (strain CJ2)).